The following is a 1016-amino-acid chain: Formate dehydrogenase-O major subunit (1016 aa).

Positions 1 to 33 (MQVSRRQFFKICAGGMAGTTAAALGFAPSVALA) form a signal peptide, tat-type signal. In terms of domain architecture, 4Fe-4S Mo/W bis-MGD-type spans 43–106 (TRETRNTCTY…GLVDFIHSES (64 aa)). [4Fe-4S] cluster is bound by residues cysteine 50, cysteine 53, cysteine 57, and cysteine 92. Selenocysteine 196 is a non-standard amino acid (selenocysteine).

Belongs to the prokaryotic molybdopterin-containing oxidoreductase family. As to quaternary structure, formate dehydrogenase is a membrane-bound complex, formed by subunits alpha, beta and gamma. It depends on Mo-bis(molybdopterin guanine dinucleotide) as a cofactor. The cofactor is [4Fe-4S] cluster. Post-translationally, exported by the Tat system. The position of the signal peptide cleavage has not been experimentally proven.

Its subcellular location is the periplasm. The enzyme catalyses formate + NAD(+) = CO2 + NADH. In terms of biological role, allows to use formate as major electron donor during aerobic respiration. Subunit alpha possibly forms the active site. In Escherichia coli (strain K12), this protein is Formate dehydrogenase-O major subunit (fdoG).